Consider the following 360-residue polypeptide: Photosystem II protein D1 1 (360 aa).

3 consecutive transmembrane segments (helical) span residues 29–46 (YVGWFGVLLIPTALTAAI), 118–133 (HFLIAIYAYMGRQWEL), and 142–156 (WIPVAFSAPVAAATA). His-118 contacts chlorophyll a. Tyr-126 lines the pheophytin a pocket. Residues Asp-170 and Glu-189 each contribute to the [CaMn4O5] cluster site. The chain crosses the membrane as a helical span at residues 197 to 218 (FHMIGVAGVFGGALFSAMHGSL). Residue His-198 coordinates chlorophyll a. A quinone contacts are provided by residues His-215 and 264–265 (SF). Fe cation is bound at residue His-215. His-272 contributes to the Fe cation binding site. Residues 274-288 (FLAAWPVIGIWFAAL) form a helical membrane-spanning segment. The [CaMn4O5] cluster site is built by His-332, Glu-333, Asp-342, and Ala-344. The propeptide occupies 345 to 360 (SGEVQPIALAAPAIAS).

The protein belongs to the reaction center PufL/M/PsbA/D family. In terms of assembly, PSII is composed of 1 copy each of membrane proteins PsbA, PsbB, PsbC, PsbD, PsbE, PsbF, PsbH, PsbI, PsbJ, PsbK, PsbL, PsbM, PsbT, PsbX, PsbY, PsbZ, Psb30/Ycf12, peripheral proteins PsbO, CyanoQ (PsbQ), PsbU, PsbV and a large number of cofactors. It forms dimeric complexes. Requires The D1/D2 heterodimer binds P680, chlorophylls that are the primary electron donor of PSII, and subsequent electron acceptors. It shares a non-heme iron and each subunit binds pheophytin, quinone, additional chlorophylls, carotenoids and lipids. D1 provides most of the ligands for the Mn4-Ca-O5 cluster of the oxygen-evolving complex (OEC). There is also a Cl(-1) ion associated with D1 and D2, which is required for oxygen evolution. The PSII complex binds additional chlorophylls, carotenoids and specific lipids. as cofactor. Post-translationally, tyr-161 forms a radical intermediate that is referred to as redox-active TyrZ, YZ or Y-Z. In terms of processing, C-terminally processed by CtpA; processing is essential to allow assembly of the oxygen-evolving complex and thus photosynthetic growth.

The protein resides in the cellular thylakoid membrane. It carries out the reaction 2 a plastoquinone + 4 hnu + 2 H2O = 2 a plastoquinol + O2. Photosystem II (PSII) is a light-driven water:plastoquinone oxidoreductase that uses light energy to abstract electrons from H(2)O, generating O(2) and a proton gradient subsequently used for ATP formation. It consists of a core antenna complex that captures photons, and an electron transfer chain that converts photonic excitation into a charge separation. The D1/D2 (PsbA/PsbD) reaction center heterodimer binds P680, the primary electron donor of PSII as well as several subsequent electron acceptors. The protein is Photosystem II protein D1 1 of Trichormus variabilis (strain ATCC 29413 / PCC 7937) (Anabaena variabilis).